The sequence spans 427 residues: Glutamate-1-semialdehyde 2,1-aminomutase (427 aa).

Lys265 carries the N6-(pyridoxal phosphate)lysine modification.

It belongs to the class-III pyridoxal-phosphate-dependent aminotransferase family. HemL subfamily. Homodimer. Pyridoxal 5'-phosphate serves as cofactor.

The protein localises to the cytoplasm. It catalyses the reaction (S)-4-amino-5-oxopentanoate = 5-aminolevulinate. It participates in porphyrin-containing compound metabolism; protoporphyrin-IX biosynthesis; 5-aminolevulinate from L-glutamyl-tRNA(Glu): step 2/2. The polypeptide is Glutamate-1-semialdehyde 2,1-aminomutase (Burkholderia ambifaria (strain MC40-6)).